The primary structure comprises 128 residues: Large ribosomal subunit protein bL17 (128 aa).

The protein belongs to the bacterial ribosomal protein bL17 family. As to quaternary structure, part of the 50S ribosomal subunit. Contacts protein L32.

This is Large ribosomal subunit protein bL17 from Streptococcus thermophilus (strain ATCC BAA-250 / LMG 18311).